The sequence spans 320 residues: o-succinylbenzoate synthase (320 aa).

The Proton donor role is filled by lysine 133. Residues aspartate 161, glutamate 190, and aspartate 213 each coordinate Mg(2+). The Proton acceptor role is filled by lysine 235.

This sequence belongs to the mandelate racemase/muconate lactonizing enzyme family. MenC type 1 subfamily. A divalent metal cation serves as cofactor.

It carries out the reaction (1R,6R)-6-hydroxy-2-succinyl-cyclohexa-2,4-diene-1-carboxylate = 2-succinylbenzoate + H2O. It participates in quinol/quinone metabolism; 1,4-dihydroxy-2-naphthoate biosynthesis; 1,4-dihydroxy-2-naphthoate from chorismate: step 4/7. It functions in the pathway quinol/quinone metabolism; menaquinone biosynthesis. Functionally, converts 2-succinyl-6-hydroxy-2,4-cyclohexadiene-1-carboxylate (SHCHC) to 2-succinylbenzoate (OSB). In Escherichia coli O81 (strain ED1a), this protein is o-succinylbenzoate synthase.